The primary structure comprises 695 residues: Cysteine-rich receptor-like protein kinase 6 (695 aa).

The N-terminal stretch at 1-31 (MRRHRPYLDGVAAAAATFLLAVLLHAPLAAG) is a signal peptide. Residues 32-294 (EDEPPPWVLC…ATSGEKTKNR (263 aa)) are Extracellular-facing. Gnk2-homologous domains lie at 38–142 (WVLC…NRDF) and 151–261 (TTYT…VFPF). 4 N-linked (GlcNAc...) asparagine glycosylation sites follow: Asn-49, Asn-53, Asn-70, and Asn-101. Cystine bridges form between Cys-96/Cys-105 and Cys-108/Cys-133. N-linked (GlcNAc...) asparagine glycosylation is present at Asn-178. Intrachain disulfides connect Cys-215/Cys-224 and Cys-227/Cys-252. A helical transmembrane segment spans residues 295–315 (IGTVLAIVMPAIAAILLMVVA). Residues 316–695 (CFCCWKRIKK…DLSITELVPR (380 aa)) are Cytoplasmic-facing. The Protein kinase domain occupies 363–634 (FADTKMIGQG…PTISSVNIML (272 aa)). Residues 369-377 (IGQGGFGMV) and Lys-391 contribute to the ATP site. The active-site Proton acceptor is Asp-488. Residues 658-682 (DSSNPYSERYPRPRHSGYSDNSTVV) form a disordered region.

Belongs to the protein kinase superfamily. Ser/Thr protein kinase family. CRK subfamily.

The protein resides in the membrane. Its function is as follows. Involved in disease resistance. Required for NPR1/NH1-mediated immunity to the bacterial blight pathogen Xanthomomas oryzae pv. oryzae (Xoo). Required for the benzothiadiazole (BTH)-induced immune response. Possesses kinase activity in vitro. This is Cysteine-rich receptor-like protein kinase 6 from Oryza sativa subsp. japonica (Rice).